The chain runs to 225 residues: Histone H3-like centromeric protein cid (225 aa).

Residues 1–11 (MPRHSRAKRAP) show a composition bias toward basic residues. A disordered region spans residues 1-131 (MPRHSRAKRA…KAANPMSRAK (131 aa)). Residues 43 to 52 (FTTSQLTLQD) show a composition bias toward polar residues. A phosphoserine mark is found at Ser-74 and Ser-75. Thr-76 carries the phosphothreonine modification. Residue Ser-77 is modified to Phosphoserine. Over residues 86-103 (RYPTTRSPQTRRMTVQQE) the composition is skewed to polar residues. Residues 133-225 (MDREIRRLQH…AYICDRGRQF (93 aa)) are H3-like.

It belongs to the histone H3 family. Forms a nucleosome-like histone octamer containing two molecules each of H2A, H2B, cid and H4 assembled in one cid-H4 heterotetramer and two H2A-H2B heterodimers. The cid-H4 heterotetramer is more compact and structurally more rigid than corresponding H3-H4 heterotetramers. Interacts with the condensin subunit Cap-G. Interacts with Chrac-14.

The protein resides in the nucleus. It is found in the chromosome. The protein localises to the centromere. Its subcellular location is the kinetochore. Its function is as follows. Histone H3-like variant which exclusively replaces conventional H3 in the nucleosome core of centromeric chromatin at the inner plate of the kinetochore. Required for recruitment and assembly of kinetochore proteins, mitotic progression and chromosome segregation. May serve as an epigenetic mark that propagates centromere identity through replication and cell division. This Drosophila melanogaster (Fruit fly) protein is Histone H3-like centromeric protein cid.